The chain runs to 480 residues: Amino acid permease 5 (480 aa).

Residues 1 to 25 (MVVQNVQDLDVLPKHSSDSFDDDGR) are disordered. The Cytoplasmic portion of the chain corresponds to 1–31 (MVVQNVQDLDVLPKHSSDSFDDDGRPKRTGT). A compositionally biased stretch (basic and acidic residues) spans 11–25 (VLPKHSSDSFDDDGR). A run of 2 helical transmembrane segments spans residues 32–52 (VWTA…LSLA) and 53–73 (WAVA…FSFV). Residues 74 to 120 (TFYTSTLLCSCYRSGDSVTGKRNYTYMDAIHSNLGGIKVKVCGVVQY) are Cytoplasmic-facing. The chain crosses the membrane as a helical span at residues 121–141 (VNLFGTAIGYTIASAISLVAI). Residues 142–157 (QRTSCQQMNGPNDPCH) lie on the Extracellular side of the membrane. Residues 158-178 (VNGNVYMIAFGIVQIIFSQIP) traverse the membrane as a helical segment. Residues 179-182 (DFDQ) lie on the Cytoplasmic side of the membrane. Residues 183-203 (LWWLSIVAAVMSFAYSAIGLG) form a helical membrane-spanning segment. At 204-241 (LGVSKVVENKEIKGSLTGVTVGTVTLSGTVTSSQKIWR) the chain is on the extracellular side. A helical transmembrane segment spans residues 242-262 (TFQSLGNIAFAYSYSMILIEI). The Cytoplasmic portion of the chain corresponds to 263–280 (QDTVKSPPAEVNTMRKAT). Residues 281 to 301 (FVSVAVTTVFYMLCGCVGYAA) form a helical membrane-spanning segment. The Extracellular portion of the chain corresponds to 302-328 (FGDNAPGNLLAHGGFRNPYWLLDIANL). The chain crosses the membrane as a helical span at residues 329–349 (AIVIHLVGAYQVYCQPLFAFV). Residues 350–383 (EKEASRRFPESEFVTKEIKIQLFPGKPFNLNLFR) lie on the Cytoplasmic side of the membrane. Residues 384–404 (LVWRTFFVMTTTLISMLMPFF) form a helical membrane-spanning segment. At 405–406 (ND) the chain is on the extracellular side. Residues 407–427 (VVGLLGAIGFWPLTVYFPVEM) form a helical membrane-spanning segment. The Cytoplasmic segment spans residues 428 to 445 (YIAQKNVPRWGTKWVCLQ). A helical membrane pass occupies residues 446–466 (VLSVTCLFVSVAAAAGSVIGI). Over 467–480 (VSDLKVYKPFQSEF) the chain is Extracellular.

This sequence belongs to the amino acid/polyamine transporter 2 family. Amino acid/auxin permease (AAAP) (TC 2.A.18.2) subfamily. In terms of tissue distribution, expressed in leaves, stems, roots, siliques and flowers.

The protein resides in the cell membrane. Its activity is regulated as follows. Inhibited by 2,4-dinitrophenol. Functionally, amino acid-proton symporter. Stereospecific transporter with a broad specificity for glutamate and both neutral and basic amino acids. Reduced affinities for asparagine and valine. High affinity transport of the cationic amino acids arginine and lysine, but not of histidine. The protein is Amino acid permease 5 (AAP5) of Arabidopsis thaliana (Mouse-ear cress).